The following is a 62-amino-acid chain: uncharacterized protein (62 aa).

This is an uncharacterized protein from Sinorhizobium fredii (strain NBRC 101917 / NGR234).